A 1420-amino-acid chain; its full sequence is MTTDVQFSSQEIELFRVKEFLIANNPAKINNENKDAVLTQIEHDFRYLIQYIKDGLPNLNESTRLIFPDTFSICLLRSHQIIASKKIDSQEFLSAVKEQLLTEANANIIFEYVLDFWADGGAPLMNALRDLFSKLLNLLKITYPMSTLKDVLFNWMNEILEVPSTLRVQYYLIDALSSDFDLYYIIEKKPHFIDNSFSLMNSDLLANSVGKCIVSLLLNIYEKHFKKNESFVQEWIQLWKSCALKYIHDKQYTKSINLYIMIPLFKNMPNSAFTLFLECMSNKDPSLLLSLLKIGQELGIEEEPFCDNKYTTVDSVNKLIEQDEYKLQVFEILTFSTKKSKPIRPFVFKTIKQYLYVFFVDTELERRNYFCSSMKHFIFRTRDCAYSLARDARKLKKAEKFPDEQREKLAQVEEARAFLVWLCNFIKYNLAPGTLYQANVTSLKLMHILIKSGVDKSTPQKFLDNQNKREYPFSIPILQDVTFLRLLIDLLVSNYADVRELSKEMLFIMISADESRGLFLDTLDANALKWTATSLLSDYEKGDAGATVYEFIFTVMGSQRSFIDQTIDILAQMVQNLQNDSIGCAENSIGPHFAALSLILNKFNSEENHQDTSKIISKLINLVLKSWEATRNVVCHDSAHGILPEKYANCGVPDQVIISHAFRAIKEASYLLETILKKYPLTRDQLDSIGDLFIVQLSTIRHSGAFQAVLPGLKAFCIRCQLEFPAILEELLSKSVKSLKSKTQHITRRSGGLPFLVTTVLSAEVTKGRPLLQKTFENLLLVARLPIPPHQDEFDLPQVNAINCINAIFVEPKLSVHCTSFVSEALELALLNFDCDIWALRNCSIMLFTSLQNRIFGKVGRSVSAKLFFTKYSGLRQLLLNILNSSIAQYSGSERKSYQIESIFLVLNVLLRLRPTAGYTGLKEFNVSVYECLSNENWKIRDMASRVLHMLSENFEEEIRKLLDLASIAKQNQLHGHLLALQQLVPQYLSGTRDMELIQRILEKKRMLLLENKCFITKKAYLKLTCCILETCDIPDSILKDYISTLRNTFIAENNEYVVDGSKQLYLAQILDMLLKYEDSIYLDDICLLGLYSPFYEAQLSTLQYMNTNFHWETTRNSEFLEQLQLLLRVPDLLPMAKALVVKILSRKKNTLSLTTCTDLLKTNNSEDTKLAAVSSLSAKLSSQTFHQVWNLLQGFFADSCSKDFRLASLECLTAYPESCKNSRILLQLYNFLWDDDSEIREKASFYLNKNFIQTADWEYNRNTSVTALIFTKKFVDVFTSSEVVEELCLQLFQYLNEYDMFAAEESAKNCLFTIEKDNQFINELQKAMHILNMIKLTGRDISKCYKDQIHHLKSALLEHFNTEDFKDSPLGWCSNAEIFSRITLLKELIQHYSPSDYENFINVLTKHSVHPLIISYSQL.

Residues 748 to 754 (RRSGGLP) form a required for activity region.

The protein belongs to the THADA family. In terms of assembly, interacts with TRM7; for 2'-O-methylation of position 32 in substrate tRNAs.

The protein localises to the cytoplasm. Together with methyltransferase TRM7, methylates the 2'-O-ribose of nucleotides at position 32 of the anticodon loop of substrate tRNAs. This is tRNA (32-2'-O)-methyltransferase regulator TRM732 (TRM732) from Saccharomyces cerevisiae (strain ATCC 204508 / S288c) (Baker's yeast).